A 373-amino-acid polypeptide reads, in one-letter code: UDP-N-acetylglucosamine--N-acetylmuramyl-(pentapeptide) pyrophosphoryl-undecaprenol N-acetylglucosamine transferase (373 aa).

Residues 13–15 (TGG), asparagine 124, arginine 164, serine 192, and glutamine 293 contribute to the UDP-N-acetyl-alpha-D-glucosamine site.

This sequence belongs to the glycosyltransferase 28 family. MurG subfamily.

Its subcellular location is the cell inner membrane. It carries out the reaction di-trans,octa-cis-undecaprenyl diphospho-N-acetyl-alpha-D-muramoyl-L-alanyl-D-glutamyl-meso-2,6-diaminopimeloyl-D-alanyl-D-alanine + UDP-N-acetyl-alpha-D-glucosamine = di-trans,octa-cis-undecaprenyl diphospho-[N-acetyl-alpha-D-glucosaminyl-(1-&gt;4)]-N-acetyl-alpha-D-muramoyl-L-alanyl-D-glutamyl-meso-2,6-diaminopimeloyl-D-alanyl-D-alanine + UDP + H(+). It functions in the pathway cell wall biogenesis; peptidoglycan biosynthesis. Cell wall formation. Catalyzes the transfer of a GlcNAc subunit on undecaprenyl-pyrophosphoryl-MurNAc-pentapeptide (lipid intermediate I) to form undecaprenyl-pyrophosphoryl-MurNAc-(pentapeptide)GlcNAc (lipid intermediate II). The protein is UDP-N-acetylglucosamine--N-acetylmuramyl-(pentapeptide) pyrophosphoryl-undecaprenol N-acetylglucosamine transferase of Allorhizobium ampelinum (strain ATCC BAA-846 / DSM 112012 / S4) (Agrobacterium vitis (strain S4)).